A 1141-amino-acid polypeptide reads, in one-letter code: MATVKNLRIGKSPNRLIQDLDVFDSPSAGWNDPWSPHSSRYHWQLHSNLGESAVFDENDFWCVCQKTRKHLHVKVRRDRGKPLIEEPEENYGIKDRIPVYYEEEELPEPHVTSPTKSEFATTSTCMKWSSKTTKSEIEVEWRDSYLDANCIKEIIDSRRPSFASLLTKKSSSHQGSSHSSQPSLFTTFTSLELFLRNVLVHNDQRAISAAPEGTFERHVGKGRQIQSLMKSLLFEYHHENVNYVPTIADAPLTDEQKLNLYLARNELIVLANHFRDTKEDPAIVANPFPVRLARPALINAFGVPNYDSVVPMYTTVFRDNSASLPDDPAFIALGITNDYPDSFVRYFYEEQKKNDEANVRVYADALAHIYNLRKSSFLRDLIAADRKNGIVSSDVIQAAYSSLGLEAEVGPDYRYSQEKIFEAFHSALLRKPEFARAIRNDLETIGYARKSSEILNYVLSTEQAFYTVNEAYQWLGIKSNTEDAMVASVALVKFEDDSDKAIEAVKWIAEERNSSILYDFLASQGRPSNKKPKEVPMDEDLAYNTLGVQDRALSDDVLINVYGFAVEDHPEQSDTLRAALKCIGEVRNSRLITHYLEHGNLDIPPEVSSLDTPIGLENTGNLCYLNSLIQYYFIIKPLRNAILDIDENKDLNMIENKEAVKKVGGRIVTRIEFLRALQFTYELRKLFIELITSKSSSVHPSSVLTYLALIPLTLDQVKSGTSSVMDLSSSRELSNLNERSITIDPRAEEQAQGLEQEQGQDEAKSPAEQSSSVNLIDFPMANTNGESQTQPHYFEVSEEEINSSMDLGRQQDVLECIDHVLFQLEASLGRISNSEDRLGSDNDLIRRLFSGKLKQTLNDASQGVRSNYEIFSHLIVDLFEEKQTLYDALDGVFETVNIDMGSETAQRSLCITELPIILQLQIQRVQFDRTTGQPFKSNAFVEFGKELSMDRYVEDTDGKMAPLLQRYWDLKREIINLQKRQQLLLTTNSNLMSSVDTLSILSKWAAQQQDSRLPINPKLPDILQEEINNVVAEVDMLKKQEASLKEERTHLFDNYISHSYDLLAVFVHRGQASFGHYWTYIHDFENNVYRKYNDEYVTVVDESEIFADTTGNNANPYMLTYIRKEYRHIIECVHREHNLLL.

Thr-112 is modified (phosphothreonine). A Phosphoserine modification is found at Ser-113. Thr-115 is subject to Phosphothreonine. In terms of domain architecture, USP spans Ile-614 to Lys-1124. The active-site Nucleophile is the Cys-623. A Phosphothreonine modification is found at Thr-721. Ser-722 carries the post-translational modification Phosphoserine. Residues Glu-748–Ser-770 form a disordered region. His-1076 acts as the Proton acceptor in catalysis.

This sequence belongs to the peptidase C19 family.

The enzyme catalyses Thiol-dependent hydrolysis of ester, thioester, amide, peptide and isopeptide bonds formed by the C-terminal Gly of ubiquitin (a 76-residue protein attached to proteins as an intracellular targeting signal).. The sequence is that of Probable ubiquitin carboxyl-terminal hydrolase 2 (ubp2) from Schizosaccharomyces pombe (strain 972 / ATCC 24843) (Fission yeast).